The primary structure comprises 329 residues: CDP-diacylglycerol--glycerol-3-phosphate 3-phosphatidyltransferase 1, chloroplastic (329 aa).

A chloroplast-targeting transit peptide spans 1–38; sequence MAFLKTLNPLLRRSPTPIPNPRSLLSLDAFLAASSPTA. 4 helical membrane passes run 150–170, 190–210, 217–237, and 300–320; these read PVIGWMIVNEWYLPAFGTLAL, VFGSYLDPLADKVLIGCVAIA, LHPGLVGLVVVRDLLLVGGAV, and ITVLSWLVASTTIASTVGYGI.

The protein belongs to the CDP-alcohol phosphatidyltransferase class-I family. It depends on Mn(2+) as a cofactor.

The protein localises to the plastid. It is found in the chloroplast membrane. The catalysed reaction is a CDP-1,2-diacyl-sn-glycerol + sn-glycerol 3-phosphate = a 1,2-diacyl-sn-glycero-3-phospho-(1'-sn-glycero-3'-phosphate) + CMP + H(+). It functions in the pathway phospholipid metabolism; phosphatidylglycerol biosynthesis; phosphatidylglycerol from CDP-diacylglycerol: step 1/2. Its function is as follows. Catalyzes the committed step to the synthesis of the acidic phospholipids. Transfers specifically a phosphatidyl group from CDP-diacylglycerol to glycerol-3-phosphate to form phosphatidylglycerophosphate. The protein is CDP-diacylglycerol--glycerol-3-phosphate 3-phosphatidyltransferase 1, chloroplastic of Oryza sativa subsp. japonica (Rice).